Consider the following 141-residue polypeptide: Regulator of ribonuclease activity B (141 aa).

Residues 112-141 form a disordered region; the sequence is GTYFEDPNAPDDEDDNDDLFPPEEDEPRLH. The span at 119–141 shows a compositional bias: acidic residues; sequence NAPDDEDDNDDLFPPEEDEPRLH.

The protein belongs to the RraB family. In terms of assembly, interacts with the C-terminal region of Rne.

It localises to the cytoplasm. Globally modulates RNA abundance by binding to RNase E (Rne) and regulating its endonucleolytic activity. Can modulate Rne action in a substrate-dependent manner by altering the composition of the degradosome. This Xenorhabdus nematophila (strain ATCC 19061 / DSM 3370 / CCUG 14189 / LMG 1036 / NCIMB 9965 / AN6) protein is Regulator of ribonuclease activity B.